An 878-amino-acid polypeptide reads, in one-letter code: Phosphoenolpyruvate carboxylase (878 aa).

Residues His-140 and Lys-545 contribute to the active site.

This sequence belongs to the PEPCase type 1 family. Mg(2+) is required as a cofactor.

The catalysed reaction is oxaloacetate + phosphate = phosphoenolpyruvate + hydrogencarbonate. Functionally, forms oxaloacetate, a four-carbon dicarboxylic acid source for the tricarboxylic acid cycle. The polypeptide is Phosphoenolpyruvate carboxylase (Pseudomonas paraeruginosa (strain DSM 24068 / PA7) (Pseudomonas aeruginosa (strain PA7))).